A 1050-amino-acid polypeptide reads, in one-letter code: Integrin alpha-5 (1050 aa).

The signal sequence occupies residues M1–G32. The Extracellular segment spans residues F33 to Y996. 7 FG-GAP repeats span residues N34 to C99, D116 to T175, R183 to Y235, Q249 to L301, R302 to T367, P368 to S426, and Q430 to N493. N75, N95, and N98 each carry an N-linked (GlcNAc...) asparagine glycan. Disulfide bonds link C90/C99 and C145/C166. Residue N172 is glycosylated (N-linked (GlcNAc...) asparagine). Residues C182 and C195 are joined by a disulfide bond. 5 residues coordinate Ca(2+): E270, S272, D274, T276, and D278. N-linked (GlcNAc...) asparagine glycans are attached at residues N287, N297, and N306. 14 residues coordinate Ca(2+): D324, N326, D328, L330, D332, D390, D392, D394, D398, D454, D456, N458, Y460, and D462. The cysteines at positions 502 and 513 are disulfide-linked. N-linked (GlcNAc...) asparagine glycans are attached at residues N507, N515, N521, and N600. Cysteines 519 and 575 form a disulfide. Residues C636 and C642 are joined by a disulfide bond. 4 N-linked (GlcNAc...) asparagine glycosylation sites follow: N649, N714, N763, and N861. Cysteines 708 and 721 form a disulfide. Disulfide bonds link C839/C958, C862/C922, and C910/C917. The helical transmembrane segment at G997–Y1022 threads the bilayer. At K1023–A1050 the chain is on the cytoplasmic side. The GFFKR motif motif lies at G1025 to R1029.

Belongs to the integrin alpha chain family. In terms of assembly, heterodimer of an alpha and a beta subunit. The alpha subunit is composed of a heavy and a light chain linked by a disulfide bond. Alpha-5 associates with beta-1.

The protein resides in the cell membrane. It localises to the cell junction. The protein localises to the focal adhesion. Its function is as follows. Integrin alpha-5/beta-1 (ITGA5:ITGB1) is a receptor for fibronectin. It recognizes the sequence R-G-D in its ligands. ITGA5:ITGB1 acts as a receptor for fibrillin-1 (FBN1) and mediates R-G-D-dependent cell adhesion to FBN1. ITGA5:ITGB1 acts as a receptor for fibronectin (FN1) and mediates R-G-D-dependent cell adhesion to FN1. ITGA5:ITGB1 is a receptor for IL1B and binding is essential for IL1B signaling. ITGA5:ITGB3 is a receptor for soluble CD40LG and is required for CD40/CD40LG signaling. In Xenopus laevis (African clawed frog), this protein is Integrin alpha-5 (itga5).